The primary structure comprises 63 residues: Alpha-conotoxin-like Sm1.3 (63 aa).

The first 16 residues, 1–16 (MFTVFLLVVLATTVVS), serve as a signal peptide directing secretion. Positions 17 to 43 (SPSDRASDGRNAAANEKASDVIALALK) are excised as a propeptide. Cystine bridges form between Cys45/Cys51 and Cys46/Cys59. At Met58 the chain carries Methionine sulfoxide; partial. Position 59 is a cysteine amide; partial (Cys59).

The protein belongs to the conotoxin A superfamily. In terms of tissue distribution, expressed by the venom duct.

It localises to the secreted. In terms of biological role, alpha-conotoxins act on postsynaptic membranes, they bind to the nicotinic acetylcholine receptors (nAChR) and thus inhibit them. This Conus stercusmuscarum (Fly-specked cone) protein is Alpha-conotoxin-like Sm1.3.